The primary structure comprises 243 residues: tRNA pseudouridine synthase A (243 aa).

The Nucleophile role is filled by aspartate 53. Position 111 (tyrosine 111) interacts with substrate.

It belongs to the tRNA pseudouridine synthase TruA family. As to quaternary structure, homodimer.

The enzyme catalyses uridine(38/39/40) in tRNA = pseudouridine(38/39/40) in tRNA. Formation of pseudouridine at positions 38, 39 and 40 in the anticodon stem and loop of transfer RNAs. The protein is tRNA pseudouridine synthase A of Chlorobium limicola (strain DSM 245 / NBRC 103803 / 6330).